A 627-amino-acid polypeptide reads, in one-letter code: MGCRKSSCPRHHTPKAGTFPPRWFPSAEEPGKKGGQPARPTVVISAGTSEHETITIARRRRTPQLKARHLLSAPANASDLSSSKLIFDVCRSPSDLLLRVPTTNSEHQQAELCATALRPTRSKRLMTENGTAQTGTVPVEQPRNGTMENAKLNMAEGDSSRMESGSKNTASPPVKADNNAAGTHSSPKKRRKVNHACVYCRRSHMTCDSERPCTRCIKRNIGHLCHDEPREPSKRARSEHEHSTAEEDGHSNNEFSNAQSMPRNVDVQDAAGQQILPDGTVALPPSSVSAVQHNTIPSSSAQNSLGHNSQQLLGYNEWLGGQSQFQDMHTFHPSYMFNAPEVTNEYNLLGDFLSSSLLDDGGMFSNDNLQGIYSDPTLINSMANLDNTALLQQAQPSQPTQSQPHQNDSVQGPSSTVVNDKARETYYMTAADPSGSDPPEERMNKLLKAKYDAGLLKPFNYVKGYARLNQYMEKNMKQSSRQKILRQLDKFRPKFRERMQSLTDIELILVEMWFERSLMEYDRVFASMAIPACCWRRTGEIFRGNKEMAELIGVPIESLRDGKLAIHEIIVEDQLVSYWEKFGAIAFDNTQKAMLTSCTLKNPNSSNPGNGIPCCFSFTIRRDNHNM.

6 disordered regions span residues 1–40, 129–148, 155–193, 225–258, 277–305, and 394–416; these read MGCRKSSCPRHHTPKAGTFPPRWFPSAEEPGKKGGQPARP, NGTAQTGTVPVEQPRNGTME, AEGDSSRMESGSKNTASPPVKADNNAAGTHSSPKKRRKV, CHDEPREPSKRARSEHEHSTAEEDGHSNNEFSNA, PDGTVALPPSSVSAVQHNTIPSSSAQNSL, and AQPSQPTQSQPHQNDSVQGPSST. Residues 162-171 are compositionally biased toward polar residues; it reads MESGSKNTAS. The zn(2)-C6 fungal-type DNA-binding region spans 197 to 225; it reads CVYCRRSHMTCDSERPCTRCIKRNIGHLC. Residues 225–251 show a composition bias toward basic and acidic residues; it reads CHDEPREPSKRARSEHEHSTAEEDGHS. Residues 286–305 are compositionally biased toward polar residues; it reads SSVSAVQHNTIPSSSAQNSL. Low complexity predominate over residues 394–403; that stretch reads AQPSQPTQSQ. Over residues 404 to 416 the composition is skewed to polar residues; sequence PHQNDSVQGPSST.

The protein localises to the nucleus. Transcription factor that governs genes involved in reductive and siderophore-mediated iron acquisition, and carbon metabolism. Suppresses the expression of sreA and induces hapX to stimulate expression of genes involved in both reductive iron assimilation and siderophore-mediated iron uptake which is essential for the maximal virulence. Also regulates genes involved in gluconeogenesis. In Aspergillus fumigatus (strain ATCC MYA-4609 / CBS 101355 / FGSC A1100 / Af293) (Neosartorya fumigata), this protein is Zinc cluster transcription factor acuM.